We begin with the raw amino-acid sequence, 401 residues long: Enoyl-[acyl-carrier-protein] reductase [NADH] (401 aa).

NAD(+) contacts are provided by residues glycine 48–tyrosine 53, phenylalanine 74–glutamate 75, aspartate 111–alanine 112, and leucine 139–alanine 140. Tyrosine 225 lines the substrate pocket. The active-site Proton donor is the tyrosine 235. NAD(+) contacts are provided by residues lysine 244 and valine 273 to threonine 275.

It belongs to the TER reductase family. Monomer.

The catalysed reaction is a 2,3-saturated acyl-[ACP] + NAD(+) = a (2E)-enoyl-[ACP] + NADH + H(+). It functions in the pathway lipid metabolism; fatty acid biosynthesis. In terms of biological role, involved in the final reduction of the elongation cycle of fatty acid synthesis (FAS II). Catalyzes the reduction of a carbon-carbon double bond in an enoyl moiety that is covalently linked to an acyl carrier protein (ACP). The protein is Enoyl-[acyl-carrier-protein] reductase [NADH] of Shewanella putrefaciens (strain CN-32 / ATCC BAA-453).